The primary structure comprises 520 residues: Poly(A)-specific ribonuclease PNLDC1 (520 aa).

Residues Asp17, Glu19, Asp260, and Asp354 each contribute to the Mg(2+) site. Residues 495 to 515 (VNCLLQVCGIVTAWALLAFIL) traverse the membrane as a helical segment.

The protein belongs to the CAF1 family. Requires Mg(2+) as cofactor.

Its subcellular location is the endoplasmic reticulum membrane. The enzyme catalyses Exonucleolytic cleavage of poly(A) to 5'-AMP.. Its function is as follows. 3'-exoribonuclease that has a preference for poly(A) tails of mRNAs, thereby efficiently degrading poly(A) tails. Exonucleolytic degradation of the poly(A) tail is often the first step in the decay of eukaryotic mRNAs and is also used to silence certain maternal mRNAs translationally during oocyte maturation and early embryonic development. May act as a regulator of multipotency in embryonic stem cells. Is a critical factor for proper spermatogenesis, involved in pre-piRNAs processing to generate mature piRNAs. The protein is Poly(A)-specific ribonuclease PNLDC1 of Homo sapiens (Human).